The primary structure comprises 158 residues: MFRIGQGFDVHQLTEGRPLIIGGIEIPYEKGLLGHSDADVLLHTVADACLGAAGEGDIGKHFPDTDPEFKDADSFKLLQHVWNIVKEKGYVLGNIDCTIIAQKPKMAPHIDAMRKRIAEGLEADVSQVNVKATTTEKLGFTGRAEGIAAQATVLIQKA.

2 residues coordinate a divalent metal cation: D9 and H11. 4-CDP-2-C-methyl-D-erythritol 2-phosphate-binding positions include 9–11 (DVH) and 35–36 (HS). H43 contributes to the a divalent metal cation binding site. 4-CDP-2-C-methyl-D-erythritol 2-phosphate is bound by residues 57–59 (DIG), 62–66 (FPDTD), 101–107 (AQKPKMA), 133–136 (TTTE), F140, and R143.

It belongs to the IspF family. In terms of assembly, homotrimer. A divalent metal cation serves as cofactor.

It carries out the reaction 4-CDP-2-C-methyl-D-erythritol 2-phosphate = 2-C-methyl-D-erythritol 2,4-cyclic diphosphate + CMP. It participates in isoprenoid biosynthesis; isopentenyl diphosphate biosynthesis via DXP pathway; isopentenyl diphosphate from 1-deoxy-D-xylulose 5-phosphate: step 4/6. Its function is as follows. Involved in the biosynthesis of isopentenyl diphosphate (IPP) and dimethylallyl diphosphate (DMAPP), two major building blocks of isoprenoid compounds. Catalyzes the conversion of 4-diphosphocytidyl-2-C-methyl-D-erythritol 2-phosphate (CDP-ME2P) to 2-C-methyl-D-erythritol 2,4-cyclodiphosphate (ME-CPP) with a corresponding release of cytidine 5-monophosphate (CMP). The sequence is that of 2-C-methyl-D-erythritol 2,4-cyclodiphosphate synthase from Bacillus velezensis (strain DSM 23117 / BGSC 10A6 / LMG 26770 / FZB42) (Bacillus amyloliquefaciens subsp. plantarum).